The following is a 626-amino-acid chain: tRNA uridine 5-carboxymethylaminomethyl modification enzyme MnmG (626 aa).

14–19 (GAGHAG) is a binding site for FAD. Residue 273–287 (GPRYCPSIEDKVVRF) coordinates NAD(+).

It belongs to the MnmG family. In terms of assembly, homodimer. Heterotetramer of two MnmE and two MnmG subunits. FAD is required as a cofactor.

Its subcellular location is the cytoplasm. Functionally, NAD-binding protein involved in the addition of a carboxymethylaminomethyl (cmnm) group at the wobble position (U34) of certain tRNAs, forming tRNA-cmnm(5)s(2)U34. In Caldicellulosiruptor saccharolyticus (strain ATCC 43494 / DSM 8903 / Tp8T 6331), this protein is tRNA uridine 5-carboxymethylaminomethyl modification enzyme MnmG.